The primary structure comprises 521 residues: Bifunctional purine biosynthesis protein PurH (521 aa).

An MGS-like domain is found at 1-147 (MAKITRALIS…KNNADVTVLV (147 aa)).

This sequence belongs to the PurH family.

It carries out the reaction (6R)-10-formyltetrahydrofolate + 5-amino-1-(5-phospho-beta-D-ribosyl)imidazole-4-carboxamide = 5-formamido-1-(5-phospho-D-ribosyl)imidazole-4-carboxamide + (6S)-5,6,7,8-tetrahydrofolate. It catalyses the reaction IMP + H2O = 5-formamido-1-(5-phospho-D-ribosyl)imidazole-4-carboxamide. It participates in purine metabolism; IMP biosynthesis via de novo pathway; 5-formamido-1-(5-phospho-D-ribosyl)imidazole-4-carboxamide from 5-amino-1-(5-phospho-D-ribosyl)imidazole-4-carboxamide (10-formyl THF route): step 1/1. It functions in the pathway purine metabolism; IMP biosynthesis via de novo pathway; IMP from 5-formamido-1-(5-phospho-D-ribosyl)imidazole-4-carboxamide: step 1/1. In Geobacter sulfurreducens (strain ATCC 51573 / DSM 12127 / PCA), this protein is Bifunctional purine biosynthesis protein PurH.